Here is a 259-residue protein sequence, read N- to C-terminus: MFRRTTWLTLYLLLAMAALARPAFAMHIAEGFLPFNWAAFWFIVVLPFWIWGLRSIRHTVKSNPGLKMLLGLAGAYTFVLSALKLPSVTGSCSHPTGIGLGAVLFGPAAMSILGGIVLLFQALLLAHGGLSTLGANTFSMAVVGPFVAYGLYRLVRKLKGSMPLAVFLAATLGDLMTYVTTSLQLALAFPAQAGGVVASMLKFMGIFAVTQLPLAISEGFLTVIVFNLLATYNKNDLEELSIMPGKTAAEGGPSRQYSR.

The first 25 residues, Met1–Ala25, serve as a signal peptide directing secretion. Transmembrane regions (helical) follow at residues Gly31–Trp51, Met68–Val88, Leu100–Phe120, Thr132–Tyr152, Gly160–Thr180, and Ile206–Phe226.

Belongs to the CbiM family. In terms of assembly, forms an energy-coupling factor (ECF) transporter complex composed of an ATP-binding protein (A component, CbiO), a transmembrane protein (T component, CbiQ) and 2 possible substrate-capture proteins (S components, CbiM and CbiN) of unknown stoichimetry.

The protein resides in the cell membrane. It functions in the pathway cofactor biosynthesis; adenosylcobalamin biosynthesis. Its function is as follows. Part of the energy-coupling factor (ECF) transporter complex CbiMNOQ involved in cobalt import. This Moorella thermoacetica (strain ATCC 39073 / JCM 9320) protein is Cobalt transport protein CbiM.